Reading from the N-terminus, the 257-residue chain is VLIRVLANLLVLQLSYAQKSSELVIGGAECNINEHRSLALVYNSSGLLCCGILINQEWVLSAAHCDMENMQIYLGLHNISRPNQDQKRRVPKQKFFCLSNKTYTRWDKDIMLIKLNSPVPYSTHIAPLSLPSSPPIVGSVCRIMGWGATKSPNENVPHVPHCANINILHYSVCRATYGRLPAKSRTLCAGIPRRRIGSCLGDSGGPLICNGQVEGIVSWASKPCVHNGAPGMYTKVYDYTDWIRSIIGGNTSATCPL.

The first 17 residues, 1 to 17 (VLIRVLANLLVLQLSYA), serve as a signal peptide directing secretion. Positions 18–23 (QKSSEL) are excised as a propeptide. The Peptidase S1 domain occupies 24–248 (VIGGAECNIN…YTDWIRSIIG (225 aa)). Cystine bridges form between Cys-30/Cys-162, Cys-49/Cys-65, Cys-97/Cys-255, Cys-141/Cys-209, Cys-173/Cys-188, and Cys-199/Cys-224. Asn-43 carries an N-linked (GlcNAc...) asparagine glycan. Catalysis depends on His-64, which acts as the Charge relay system. 2 N-linked (GlcNAc...) asparagine glycosylation sites follow: Asn-78 and Asn-100. Asp-109 (charge relay system) is an active-site residue. Catalysis depends on Ser-203, which acts as the Charge relay system. Asn-250 carries an N-linked (GlcNAc...) asparagine glycan.

The protein belongs to the peptidase S1 family. Snake venom subfamily. As to expression, expressed by the venom gland.

The protein resides in the secreted. Snake venom serine protease that may act in the hemostasis system of the prey. This is Snake venom serine protease rhinocerase 4 from Bitis rhinoceros (West African gaboon viper).